A 148-amino-acid chain; its full sequence is Large ribosomal subunit protein uL15 (148 aa).

The disordered stretch occupies residues 14 to 54 (HRKKRVGCGEGGGHGKTSGRGGKGQTARSGSSIRPGFEGGQ). Over residues 21-37 (CGEGGGHGKTSGRGGKG) the composition is skewed to gly residues.

This sequence belongs to the universal ribosomal protein uL15 family. As to quaternary structure, part of the 50S ribosomal subunit.

Its function is as follows. Binds to the 23S rRNA. This is Large ribosomal subunit protein uL15 from Opitutus terrae (strain DSM 11246 / JCM 15787 / PB90-1).